A 471-amino-acid chain; its full sequence is Putative multidrug resistance protein MdtD (471 aa).

Over 1–11 the chain is Periplasmic; it reads MTDLPDSTRWQ. A helical membrane pass occupies residues 12–32; sequence LWIVAFGFFMQSLDTTIVNTA. Over 33-48 the chain is Cytoplasmic; sequence LPSMAQSLGESPLHMH. Residues 49–69 form a helical membrane-spanning segment; the sequence is MVIVSYVLTVAVMLPASGWLA. Residues 70–76 are Periplasmic-facing; sequence DKVGVRN. A helical transmembrane segment spans residues 77–97; that stretch reads IFFTAIVLFTLGSLFCALSGT. At 98–101 the chain is on the cytoplasmic side; it reads LNEL. The chain crosses the membrane as a helical span at residues 102-124; sequence LLARALQGVGGAMMVPVGRLTVM. Over 125–137 the chain is Periplasmic; sequence KIVPREQYMAAMT. Residues 138–158 form a helical membrane-spanning segment; sequence FVTLPGQVGPLLGPALGGLLV. The Cytoplasmic segment spans residues 159–164; it reads EYASWH. A helical transmembrane segment spans residues 165 to 185; it reads WIFLINIPVGIIGAIATLMLM. The Periplasmic portion of the chain corresponds to 186–196; the sequence is PNYTMQTRRFD. A helical membrane pass occupies residues 197–217; that stretch reads LSGFLLLAVGMAVLTLALDGS. Residues 218–224 lie on the Cytoplasmic side of the membrane; the sequence is KGTGLSP. The helical transmembrane segment at 225–245 threads the bilayer; sequence LAITGLVAVGVVALVLYLLHA. The Periplasmic segment spans residues 246 to 262; the sequence is RNNHRALFSLKLFRTRT. The helical transmembrane segment at 263–283 threads the bilayer; it reads FSLGLAGSFAGRIGSGMLPFM. Topologically, residues 284 to 285 are cytoplasmic; that stretch reads TP. Residues 286 to 306 form a helical membrane-spanning segment; that stretch reads VFLQIGLGFSPFHAGLMMIPM. Residues 307–341 lie on the Periplasmic side of the membrane; that stretch reads VLGSMGMKRIVVQVVNRFGYRRVLVATTLGLSLVT. Residues 342 to 362 traverse the membrane as a helical segment; that stretch reads LLFMTTALLGWYYVLPFVLFL. The Cytoplasmic portion of the chain corresponds to 363–395; that stretch reads QGMVNSTRFSSMNTLTLKDLPDNLASSGNSLLS. Residues 396-416 traverse the membrane as a helical segment; sequence MIMQLSMSIGVTIAGLLLGLF. Topologically, residues 417 to 430 are periplasmic; that stretch reads GSQHVSVDSGTTQT. A helical membrane pass occupies residues 431–451; that stretch reads VFMYTWLSMAFIIALPAFIFA. At 452–471 the chain is on the cytoplasmic side; that stretch reads RVPNDTHQNVAISRRKRSAQ.

This sequence belongs to the major facilitator superfamily. TCR/Tet family.

Its subcellular location is the cell inner membrane. This is Putative multidrug resistance protein MdtD from Escherichia coli O127:H6 (strain E2348/69 / EPEC).